Reading from the N-terminus, the 501-residue chain is Bifunctional purine biosynthesis protein PurH (501 aa).

Positions 1–144 (MKKRALISVF…KNFKDVVVLS (144 aa)) constitute an MGS-like domain.

It belongs to the PurH family.

The enzyme catalyses (6R)-10-formyltetrahydrofolate + 5-amino-1-(5-phospho-beta-D-ribosyl)imidazole-4-carboxamide = 5-formamido-1-(5-phospho-D-ribosyl)imidazole-4-carboxamide + (6S)-5,6,7,8-tetrahydrofolate. It catalyses the reaction IMP + H2O = 5-formamido-1-(5-phospho-D-ribosyl)imidazole-4-carboxamide. Its pathway is purine metabolism; IMP biosynthesis via de novo pathway; 5-formamido-1-(5-phospho-D-ribosyl)imidazole-4-carboxamide from 5-amino-1-(5-phospho-D-ribosyl)imidazole-4-carboxamide (10-formyl THF route): step 1/1. It functions in the pathway purine metabolism; IMP biosynthesis via de novo pathway; IMP from 5-formamido-1-(5-phospho-D-ribosyl)imidazole-4-carboxamide: step 1/1. The polypeptide is Bifunctional purine biosynthesis protein PurH (Clostridium perfringens (strain 13 / Type A)).